Here is a 68-residue protein sequence, read N- to C-terminus: Small ribosomal subunit protein bS21 (68 aa).

Belongs to the bacterial ribosomal protein bS21 family.

The polypeptide is Small ribosomal subunit protein bS21 (Ruegeria pomeroyi (strain ATCC 700808 / DSM 15171 / DSS-3) (Silicibacter pomeroyi)).